A 261-amino-acid polypeptide reads, in one-letter code: Adenosylcobinamide-GDP ribazoletransferase (261 aa).

Helical transmembrane passes span 12–32, 46–66, 67–87, 120–140, and 199–219; these read NLFF…WVVI, LVGL…QLIL, PASI…GAFH, GALS…ELAL, and IFVL…TLWL.

It belongs to the CobS family. Mg(2+) is required as a cofactor.

The protein localises to the cell inner membrane. The catalysed reaction is alpha-ribazole + adenosylcob(III)inamide-GDP = adenosylcob(III)alamin + GMP + H(+). The enzyme catalyses alpha-ribazole 5'-phosphate + adenosylcob(III)inamide-GDP = adenosylcob(III)alamin 5'-phosphate + GMP + H(+). It functions in the pathway cofactor biosynthesis; adenosylcobalamin biosynthesis; adenosylcobalamin from cob(II)yrinate a,c-diamide: step 7/7. In terms of biological role, joins adenosylcobinamide-GDP and alpha-ribazole to generate adenosylcobalamin (Ado-cobalamin). Also synthesizes adenosylcobalamin 5'-phosphate from adenosylcobinamide-GDP and alpha-ribazole 5'-phosphate. The chain is Adenosylcobinamide-GDP ribazoletransferase from Shewanella frigidimarina (strain NCIMB 400).